The primary structure comprises 414 residues: Probable tRNA pseudouridine synthase D (414 aa).

Aspartate 90 acts as the Nucleophile in catalysis. Residues 162–382 (GFPNFFGVQR…SSGDYRIISA (221 aa)) enclose the TRUD domain.

It belongs to the pseudouridine synthase TruD family.

It carries out the reaction uridine(13) in tRNA = pseudouridine(13) in tRNA. Could be responsible for synthesis of pseudouridine from uracil-13 in transfer RNAs. This is Probable tRNA pseudouridine synthase D from Picrophilus torridus (strain ATCC 700027 / DSM 9790 / JCM 10055 / NBRC 100828 / KAW 2/3).